We begin with the raw amino-acid sequence, 93 residues long: UPF0358 protein BH2626 (93 aa).

It belongs to the UPF0358 family.

The protein is UPF0358 protein BH2626 of Halalkalibacterium halodurans (strain ATCC BAA-125 / DSM 18197 / FERM 7344 / JCM 9153 / C-125) (Bacillus halodurans).